Consider the following 141-residue polypeptide: Brain ribonuclease (141 aa).

The segment at 1-25 (KETAAAKFRRQHMDSGSSSSSNSNY) is disordered. Lys-7 and Arg-10 together coordinate substrate. Catalysis depends on His-12, which acts as the Proton acceptor. Residues 15 to 24 (SGSSSSSNSN) show a composition bias toward low complexity. 4 cysteine pairs are disulfide-bonded: Cys-26–Cys-84, Cys-40–Cys-95, Cys-58–Cys-110, and Cys-65–Cys-72. 41–45 (KPVNT) lines the substrate pocket. A glycan (N-linked (GlcNAc...) asparagine) is linked at Asn-62. Residues Lys-66 and Arg-85 each coordinate substrate. His-119 functions as the Proton donor in the catalytic mechanism. Residue Thr-129 is glycosylated (O-linked (GalNAc...) threonine).

Belongs to the pancreatic ribonuclease family.

It is found in the secreted. This chain is Brain ribonuclease (BRN), found in Giraffa camelopardalis (Giraffe).